The chain runs to 202 residues: UPF0301 protein BCG_0069 (202 aa).

This sequence belongs to the UPF0301 (AlgH) family.

The chain is UPF0301 protein BCG_0069 from Mycobacterium bovis (strain BCG / Pasteur 1173P2).